Here is a 252-residue protein sequence, read N- to C-terminus: Probable transcriptional regulatory protein Fnod_1106 (252 aa).

The protein belongs to the TACO1 family.

The protein resides in the cytoplasm. This is Probable transcriptional regulatory protein Fnod_1106 from Fervidobacterium nodosum (strain ATCC 35602 / DSM 5306 / Rt17-B1).